Reading from the N-terminus, the 338-residue chain is Ketol-acid reductoisomerase (NADP(+)) (338 aa).

The 181-residue stretch at 1-181 folds into the KARI N-terminal Rossmann domain; that stretch reads MKVFYDKDCD…GGGRAGIIET (181 aa). NADP(+) contacts are provided by residues 24 to 27, Arg-47, and Ser-52; that span reads YGSQ. His-107 is a catalytic residue. NADP(+) is bound at residue Gly-133. One can recognise a KARI C-terminal knotted domain in the interval 182–327; it reads NFREETETDL…AKLRAMMPWI (146 aa). Mg(2+) is bound by residues Asp-190, Glu-194, Glu-226, and Glu-230. A substrate-binding site is contributed by Ser-251.

It belongs to the ketol-acid reductoisomerase family. It depends on Mg(2+) as a cofactor.

It carries out the reaction (2R)-2,3-dihydroxy-3-methylbutanoate + NADP(+) = (2S)-2-acetolactate + NADPH + H(+). It catalyses the reaction (2R,3R)-2,3-dihydroxy-3-methylpentanoate + NADP(+) = (S)-2-ethyl-2-hydroxy-3-oxobutanoate + NADPH + H(+). It functions in the pathway amino-acid biosynthesis; L-isoleucine biosynthesis; L-isoleucine from 2-oxobutanoate: step 2/4. Its pathway is amino-acid biosynthesis; L-valine biosynthesis; L-valine from pyruvate: step 2/4. Its function is as follows. Involved in the biosynthesis of branched-chain amino acids (BCAA). Catalyzes an alkyl-migration followed by a ketol-acid reduction of (S)-2-acetolactate (S2AL) to yield (R)-2,3-dihydroxy-isovalerate. In the isomerase reaction, S2AL is rearranged via a Mg-dependent methyl migration to produce 3-hydroxy-3-methyl-2-ketobutyrate (HMKB). In the reductase reaction, this 2-ketoacid undergoes a metal-dependent reduction by NADPH to yield (R)-2,3-dihydroxy-isovalerate. The protein is Ketol-acid reductoisomerase (NADP(+)) of Herminiimonas arsenicoxydans.